Here is a 483-residue protein sequence, read N- to C-terminus: V-type proton ATPase subunit H (483 aa).

The residue at position 483 (Ser-483) is a Phosphoserine.

Belongs to the V-ATPase H subunit family. As to quaternary structure, V-ATPase is a heteromultimeric enzyme made up of two complexes: the ATP-hydrolytic V1 complex and the proton translocation V0 complex. The V1 complex consists of three catalytic AB heterodimers that form a heterohexamer, three peripheral stalks each consisting of EG heterodimers, one central rotor including subunits D and F, and the regulatory subunits C and H. The proton translocation complex V0 consists of the proton transport subunit a, a ring of proteolipid subunits c9c'', rotary subunit d, subunits e and f, and the accessory subunits ATP6AP1/Ac45 and ATP6AP2/PRR. Interacts with AP2M1. Interacts with TM9SF4 in colon cancer cells. (Microbial infection) Interacts with HIV-1 Nef protein. In terms of assembly, (Microbial infection) Interacts with M.tuberculosis PtpA, which blocks V-ATPase trafficking and phagosome acidification. In terms of tissue distribution, widely expressed.

The protein resides in the cytoplasmic vesicle. It localises to the clathrin-coated vesicle membrane. Functionally, subunit of the V1 complex of vacuolar(H+)-ATPase (V-ATPase), a multisubunit enzyme composed of a peripheral complex (V1) that hydrolyzes ATP and a membrane integral complex (V0) that translocates protons. V-ATPase is responsible for acidifying and maintaining the pH of intracellular compartments and in some cell types, is targeted to the plasma membrane, where it is responsible for acidifying the extracellular environment. Subunit H is essential for V-ATPase activity, but not for the assembly of the complex. Involved in the endocytosis mediated by clathrin-coated pits, required for the formation of endosomes. This is V-type proton ATPase subunit H (ATP6V1H) from Homo sapiens (Human).